The sequence spans 336 residues: tRNA-cytidine(32) 2-sulfurtransferase (336 aa).

The interval 1 to 42 (MNAPDTLTGLEANAPVTEEAPAASEAERKRAHTRREQKEQYE) is disordered. The PP-loop motif motif lies at 75-80 (SGGKDS). Positions 150, 153, and 241 each coordinate [4Fe-4S] cluster. The disordered stretch occupies residues 301–328 (PHGDIAFDEEPCSADSASNQTQRPSQTV). Positions 315 to 328 (DSASNQTQRPSQTV) are enriched in polar residues.

It belongs to the TtcA family. In terms of assembly, homodimer. Requires Mg(2+) as cofactor. It depends on [4Fe-4S] cluster as a cofactor.

Its subcellular location is the cytoplasm. The catalysed reaction is cytidine(32) in tRNA + S-sulfanyl-L-cysteinyl-[cysteine desulfurase] + AH2 + ATP = 2-thiocytidine(32) in tRNA + L-cysteinyl-[cysteine desulfurase] + A + AMP + diphosphate + H(+). The protein operates within tRNA modification. Functionally, catalyzes the ATP-dependent 2-thiolation of cytidine in position 32 of tRNA, to form 2-thiocytidine (s(2)C32). The sulfur atoms are provided by the cysteine/cysteine desulfurase (IscS) system. In Paraburkholderia phymatum (strain DSM 17167 / CIP 108236 / LMG 21445 / STM815) (Burkholderia phymatum), this protein is tRNA-cytidine(32) 2-sulfurtransferase.